The following is a 312-amino-acid chain: Olfactory receptor 2L8 (312 aa).

The Extracellular segment spans residues 1–24 (MENYNQTSTDFILLGLFPPSRIDL). An N-linked (GlcNAc...) asparagine glycan is attached at Asn5. The helical transmembrane segment at 25-48 (FFFILIVFIFLMALIGNLSMILLI) threads the bilayer. At 49–56 (FLDTHLHT) the chain is on the cytoplasmic side. Residues 57 to 78 (PMYFLLSQLSLIDLNYISTIVP) traverse the membrane as a helical segment. Topologically, residues 79 to 99 (KMASDFLHGNKSISFTGCGIQ) are extracellular. N-linked (GlcNAc...) asparagine glycosylation is present at Asn88. Residues Cys96 and Cys188 are joined by a disulfide bond. A helical transmembrane segment spans residues 100 to 119 (SFFFLALGGAEALLLASMAY). The Cytoplasmic segment spans residues 120-138 (DRYIAICFPLHYLIRMSKR). The chain crosses the membrane as a helical span at residues 139-157 (VCVLMITGSWIIGSINACA). Topologically, residues 158-194 (HTVYVLHIPYCRSRAINHFFCDVPAMVTLACMDTWVY) are extracellular. The chain crosses the membrane as a helical span at residues 195–218 (EGTVFLSATIFLVFPFIGISCSYG). Over 219–235 (QVLFAVYHMKSAEGRKK) the chain is Cytoplasmic. The helical transmembrane segment at 236–258 (AYLTCSTHLTVVTFYYAPFVYTY) threads the bilayer. The Extracellular segment spans residues 259-271 (LRPRSLRSPTEDK). Residues 272 to 291 (VLAVFYTILTPMLNPIIYSL) form a helical membrane-spanning segment. Topologically, residues 292 to 312 (RNKEVMGALTRVSQRICSVKM) are cytoplasmic.

It belongs to the G-protein coupled receptor 1 family.

The protein resides in the cell membrane. Odorant receptor. The sequence is that of Olfactory receptor 2L8 (OR2L8) from Homo sapiens (Human).